Reading from the N-terminus, the 185-residue chain is Ribosome-recycling factor (185 aa).

It belongs to the RRF family.

The protein resides in the cytoplasm. Responsible for the release of ribosomes from messenger RNA at the termination of protein biosynthesis. May increase the efficiency of translation by recycling ribosomes from one round of translation to another. The protein is Ribosome-recycling factor of Pseudomonas syringae pv. tomato (strain ATCC BAA-871 / DC3000).